The primary structure comprises 406 residues: Putative 12-oxophytodienoate reductase 12 (406 aa).

Residues 41–43 (PLT), Ala-74, and Gln-119 contribute to the FMN site. Residue 188–191 (HAAN) participates in substrate binding. FMN-binding positions include Arg-240, Gly-317, and 338–339 (GR).

This sequence belongs to the NADH:flavin oxidoreductase/NADH oxidase family. Requires FMN as cofactor.

In terms of biological role, putative oxophytodienoate reductase that may be involved in the biosynthesis or metabolism of oxylipin signaling molecules. The protein is Putative 12-oxophytodienoate reductase 12 (OPR12) of Oryza sativa subsp. japonica (Rice).